The following is a 219-amino-acid chain: Large ribosomal subunit protein uL4 (219 aa).

A disordered region spans residues 43-101 (AAARQGTHKTKRRGEVRGGGKKPYRQKGTGRARQGSTRAPQFAGGGVVHGPQPRDYSQR). Residues 61-72 (GGKKPYRQKGTG) are compositionally biased toward basic residues.

This sequence belongs to the universal ribosomal protein uL4 family. Part of the 50S ribosomal subunit.

Functionally, one of the primary rRNA binding proteins, this protein initially binds near the 5'-end of the 23S rRNA. It is important during the early stages of 50S assembly. It makes multiple contacts with different domains of the 23S rRNA in the assembled 50S subunit and ribosome. Forms part of the polypeptide exit tunnel. This chain is Large ribosomal subunit protein uL4, found in Streptomyces coelicolor (strain ATCC BAA-471 / A3(2) / M145).